The chain runs to 328 residues: Porphobilinogen deaminase (328 aa).

S-(dipyrrolylmethanemethyl)cysteine is present on cysteine 250.

The protein belongs to the HMBS family. Monomer. It depends on dipyrromethane as a cofactor.

It carries out the reaction 4 porphobilinogen + H2O = hydroxymethylbilane + 4 NH4(+). It participates in porphyrin-containing compound metabolism; protoporphyrin-IX biosynthesis; coproporphyrinogen-III from 5-aminolevulinate: step 2/4. Its function is as follows. Tetrapolymerization of the monopyrrole PBG into the hydroxymethylbilane pre-uroporphyrinogen in several discrete steps. This chain is Porphobilinogen deaminase, found in Burkholderia ambifaria (strain ATCC BAA-244 / DSM 16087 / CCUG 44356 / LMG 19182 / AMMD) (Burkholderia cepacia (strain AMMD)).